The primary structure comprises 1238 residues: Virulence sensor protein BvgS (1238 aa).

Positions 1 to 32 (MPAPHRLYPRSLICLAQALLAWALLAWAPAQA) are cleaved as a signal peptide. The Cytoplasmic segment spans residues 33-307 (SQELTLVGKA…REQQWMADHP (275 aa)). Residues 308–331 (VVKVAVLNLFAPFTLFRTDEQFGG) form a helical membrane-spanning segment. Topologically, residues 332-541 (ISAAVLQLLQ…PRTWYAYRNE (210 aa)) are periplasmic. Residues 542-563 (IYLLIGLGLLSALLFLSWIVYL) form a helical membrane-spanning segment. Over 564 to 1238 (RRQIRQRKRA…LEQRPHQDQP (675 aa)) the chain is Cytoplasmic. Residues 580-651 (QLEFMRVLID…MHEFLLTRVA (72 aa)) enclose the PAS domain. The 57-residue stretch at 652–708 (AEREPRFEDRDVTLHGRTRHVYQWTIPYGDSLGELKGIIGGWIDITERAELLRKLHD) folds into the PAC domain. The Histidine kinase domain maps to 726–948 (TMSHEIRTPM…TVSVDLRLTM (223 aa)). At histidine 729 the chain carries Phosphohistidine; by autocatalysis. The 122-residue stretch at 974–1095 (RVLVVDDHKP…ALRQRLNEAV (122 aa)) folds into the Response regulatory domain. Aspartate 1023 bears the 4-aspartylphosphate mark. The 96-residue stretch at 1133–1228 (DEALIRQLLE…AALETQLRAW (96 aa)) folds into the HPt domain. A Phosphohistidine modification is found at histidine 1172.

Post-translationally, activation requires a sequential transfer of a phosphate group from a His in the primary transmitter domain, to an Asp in the receiver domain and to a His in the secondary transmitter domain.

The protein localises to the cell inner membrane. It catalyses the reaction ATP + protein L-histidine = ADP + protein N-phospho-L-histidine.. Member of the two-component regulatory system BvgS/BvgA. Phosphorylates BvgA via a four-step phosphorelay in response to environmental signals. In Bordetella pertussis (strain Tohama I / ATCC BAA-589 / NCTC 13251), this protein is Virulence sensor protein BvgS (bvgS).